We begin with the raw amino-acid sequence, 507 residues long: F-box only protein 31 (507 aa).

Positions 19–42 (RQQRRGPAETAAADSEADTDPEEE) are disordered. Ser33 is modified (phosphoserine). Positions 33–42 (SEADTDPEEE) are enriched in acidic residues. Position 37 is a phosphothreonine (Thr37). The D box motif lies at 50 to 55 (RCSLLE). An F-box domain is found at 50-96 (RCSLLELPPELLVEIFASLPGTDLPSLAQVCSRFRRILHTDTIWRRR). Zn(2+) is bound by residues Cys192, His200, Cys216, and His222. Ser264 carries the phosphoserine; by ATM modification. A DDL motif motif is present at residues 283–285 (DDL). Positions 364 to 421 (RQEQEAGEGPAPHREPAVKDPEGPPAKASKEAGPGAEAAEQSSTSGQGQPFVLPAGVS) are disordered. Basic and acidic residues predominate over residues 374–385 (APHREPAVKDPE). Residue Ser448 is modified to Phosphoserine.

This sequence belongs to the FBXO31 family. As to quaternary structure, part of a SCF (SKP1-cullin-F-box) protein ligase complex SCF(FBXO31) composed of CUL1, SKP1, RBX1 and FBXO31. Interacts (when phosphorylated at Ser-33) with CDC20, promoting ubiquitination by the APC/C complex. Phosphorylation at Ser-264 by ATM following gamma-irradiation results in its stabilization. Phosphorylation at Ser-448 in absence of stress promotes its ubiquitination and degradation by the SCF(FBXO46) complex. Phosphorylation at Ser-33 by AKT1 promotes association with CDC20 and ubiquitination by the APC/C complex. Post-translationally, ubiquitinated by the SCF(FBXO46) complex in absence of stress, promoting its degradation. Ubiquitinated by the APC/C complex following phosphorylation at Ser-33, leading to its degradation by the proteasome.

It is found in the cytoplasm. The protein resides in the cytoskeleton. The protein localises to the microtubule organizing center. It localises to the centrosome. It participates in protein modification; protein ubiquitination. Its function is as follows. Substrate-recognition component of the SCF(FBXO31) protein ligase complex, which specifically mediates the ubiquitination of proteins amidated at their C-terminus in response to oxidative stress, leading to their degradation by the proteasome. FBXO31 specifically recognizes and binds C-terminal peptides bearing an amide: C-terminal amidation in response to oxidative stress takes place following protein fragmentation. The SCF(FBXO31) also plays a role in G1 arrest following DNA damage by mediating ubiquitination of phosphorylated cyclin-D1 (CCND1), promoting its degradation by the proteasome, resulting in G1 arrest. The SCF(FBXO31) complex is however not a major regulator of CCND1 stability during the G1/S transition. In response to genotoxic stress, the SCF(FBXO31) complex directs ubiquitination and degradation of phosphorylated MDM2, thereby promoting p53/TP53-mediated DNA damage response. SCF(FBXO31) complex is required for genomic integrity by catalyzing ubiquitination and degradation of cyclin-A (CCNA1 and/or CCNA2) during the G1 phase. In response to genotoxic stress, the SCF(FBXO31) complex directs ubiquitination and degradation of phosphorylated FBXO46 and MAP2K6. SCF(FBXO31) complex promotes ubiquitination and degradation of CDT1 during the G2 phase to prevent re-replication. The SCF(FBXO31) complex also mediates ubiquitination and degradation of DUSP6, OGT and PARD6A. This chain is F-box only protein 31, found in Rattus norvegicus (Rat).